We begin with the raw amino-acid sequence, 311 residues long: Formimidoylglutamase (311 aa).

Positions 130, 155, 157, 159, 242, and 244 each coordinate Mn(2+).

Belongs to the arginase family. Mn(2+) is required as a cofactor.

It catalyses the reaction N-formimidoyl-L-glutamate + H2O = formamide + L-glutamate. It functions in the pathway amino-acid degradation; L-histidine degradation into L-glutamate; L-glutamate from N-formimidoyl-L-glutamate (hydrolase route): step 1/1. Catalyzes the conversion of N-formimidoyl-L-glutamate to L-glutamate and formamide. The chain is Formimidoylglutamase from Staphylococcus epidermidis (strain ATCC 35984 / DSM 28319 / BCRC 17069 / CCUG 31568 / BM 3577 / RP62A).